We begin with the raw amino-acid sequence, 404 residues long: Diaminopropionate ammonia-lyase (404 aa).

The residue at position 78 (Lys78) is an N6-(pyridoxal phosphate)lysine.

It belongs to the diaminopropionate ammonia-lyase family. In terms of assembly, homodimer. Pyridoxal 5'-phosphate serves as cofactor.

It catalyses the reaction (S)-2,3-diaminopropanoate + H2O + H(+) = pyruvate + 2 NH4(+). The enzyme catalyses (R)-2,3-diaminopropanoate + H2O + H(+) = pyruvate + 2 NH4(+). Competitively inhibited by L- and D-alanine. Catalyzes the alpha,beta-elimination reaction of both L- and D-alpha,beta-diaminopropionate (DAP) to form pyruvate and ammonia. In vitro L- and D-isomers of serine are also degraded, though slowly; it is the only serine dehydratase which can eliminate an amino group at the beta-carbon position. In vivo L-, D- and a mixure of DL-DAP allow growth. DL-DAP is toxic in the absence of this enzyme, it may inhibit enzymes involved in the synthesis of pyruvate and aspartate, as well as amino acids derived from them. This Salmonella typhimurium (strain LT2 / SGSC1412 / ATCC 700720) protein is Diaminopropionate ammonia-lyase (dpaL).